A 327-amino-acid polypeptide reads, in one-letter code: Methionyl-tRNA formyltransferase (327 aa).

Residue 122-125 (SLLP) participates in (6S)-5,6,7,8-tetrahydrofolate binding.

This sequence belongs to the Fmt family.

It catalyses the reaction L-methionyl-tRNA(fMet) + (6R)-10-formyltetrahydrofolate = N-formyl-L-methionyl-tRNA(fMet) + (6S)-5,6,7,8-tetrahydrofolate + H(+). Its function is as follows. Attaches a formyl group to the free amino group of methionyl-tRNA(fMet). The formyl group appears to play a dual role in the initiator identity of N-formylmethionyl-tRNA by promoting its recognition by IF2 and preventing the misappropriation of this tRNA by the elongation apparatus. This is Methionyl-tRNA formyltransferase from Ralstonia nicotianae (strain ATCC BAA-1114 / GMI1000) (Ralstonia solanacearum).